The chain runs to 212 residues: Cytochrome c biogenesis ATP-binding export protein CcmA (212 aa).

The ABC transporter domain occupies 8–212 (LQATALACER…RSIDLAKGSA (205 aa)). 40–47 (GPNGSGKT) is a binding site for ATP.

Belongs to the ABC transporter superfamily. CcmA exporter (TC 3.A.1.107) family. The complex is composed of two ATP-binding proteins (CcmA) and two transmembrane proteins (CcmB).

It localises to the cell inner membrane. It carries out the reaction heme b(in) + ATP + H2O = heme b(out) + ADP + phosphate + H(+). Part of the ABC transporter complex CcmAB involved in the biogenesis of c-type cytochromes; once thought to export heme, this seems not to be the case, but its exact role is uncertain. Responsible for energy coupling to the transport system. The sequence is that of Cytochrome c biogenesis ATP-binding export protein CcmA from Pseudomonas syringae pv. tomato (strain ATCC BAA-871 / DC3000).